We begin with the raw amino-acid sequence, 359 residues long: Salicylate carboxymethyltransferase (359 aa).

Tyr18 contacts S-adenosyl-L-methionine. Substrate contacts are provided by residues Tyr18, 21 to 25, and Gln25; that span reads NSFIQ. S-adenosyl-L-methionine is bound by residues Gly59, 59–60, 59–61, Asn65, 96–99, Asp98, 129–131, and 146–148; these read GC, GCS, LNDL, SFY, and SYS. Residues 147–151 and Trp151 contribute to the substrate site; that span reads YSLMW. Mg(2+)-binding residues include Asn162, Asp248, Phe250, and Asn251. Tyr255 contributes to the substrate binding site.

Belongs to the methyltransferase superfamily. SABATH family.

The enzyme catalyses salicylate + S-adenosyl-L-methionine = methyl salicylate + S-adenosyl-L-homocysteine. Its function is as follows. Catalyzes the methylation of the free carboxyl end of the plant hormone salicylic acid (SA). Converts SA to SA methyl ester (MSA). The volatile compound MSA is hypothesized to act as an airborne signal that triggers defense responses in uninfected plants. MSA is an important chemoattractant for moth pollinated flowering plants. This chain is Salicylate carboxymethyltransferase (SAMT), found in Clarkia breweri (Fairy fans).